A 285-amino-acid chain; its full sequence is Chemotaxis protein LafT (285 aa).

4 helical membrane-spanning segments follow: residues 4-23, 34-51, 171-191, and 201-222; these read FLGV…WAGG, FLII…GNPP, ALPG…MQAI, and HVAA…GLDP. Residues 223–285 are Cytoplasmic-facing; that stretch reads LSNAMAQRVK…MEKWLAEQEG (63 aa).

The protein belongs to the MotA family.

It is found in the cell inner membrane. Required for rotation of the flagellar motor. Probable transmembrane proton channel. In Vibrio parahaemolyticus serotype O3:K6 (strain RIMD 2210633), this protein is Chemotaxis protein LafT (lafT).